A 220-amino-acid polypeptide reads, in one-letter code: Endonuclease NucS (220 aa).

It belongs to the NucS endonuclease family.

Its subcellular location is the cytoplasm. In terms of biological role, cleaves both 3' and 5' ssDNA extremities of branched DNA structures. This is Endonuclease NucS from Mycobacterium leprae (strain TN).